Reading from the N-terminus, the 358-residue chain is 3-isopropylmalate dehydrogenase (358 aa).

Residue 77 to 90 participates in NAD(+) binding; the sequence is GPKWDNLPIDQRPE. 4 residues coordinate substrate: arginine 98, arginine 108, arginine 137, and aspartate 221. Mg(2+)-binding residues include aspartate 221, aspartate 245, and aspartate 249. An NAD(+)-binding site is contributed by 279–291; it reads GSAPDIAHLNIAN.

This sequence belongs to the isocitrate and isopropylmalate dehydrogenases family. LeuB type 1 subfamily. In terms of assembly, homodimer. The cofactor is Mg(2+). Requires Mn(2+) as cofactor.

Its subcellular location is the cytoplasm. It carries out the reaction (2R,3S)-3-isopropylmalate + NAD(+) = 4-methyl-2-oxopentanoate + CO2 + NADH. It participates in amino-acid biosynthesis; L-leucine biosynthesis; L-leucine from 3-methyl-2-oxobutanoate: step 3/4. In terms of biological role, catalyzes the oxidation of 3-carboxy-2-hydroxy-4-methylpentanoate (3-isopropylmalate) to 3-carboxy-4-methyl-2-oxopentanoate. The product decarboxylates to 4-methyl-2 oxopentanoate. The chain is 3-isopropylmalate dehydrogenase from Campylobacter jejuni (strain RM1221).